The chain runs to 138 residues: Basic phospholipase A2 vaspin B chain (138 aa).

An N-terminal signal peptide occupies residues 1 to 16; it reads MRILWIVAVCLIGVEG. 7 cysteine pairs are disulfide-bonded: C42–C131, C44–C60, C59–C111, C65–C138, C66–C104, C73–C97, and C91–C102. Residues Y43, G45, and G47 each contribute to the Ca(2+) site. H63 is a catalytic residue. D64 provides a ligand contact to Ca(2+). D105 is a catalytic residue.

Belongs to the phospholipase A2 family. Group II subfamily. D49 sub-subfamily. Heterodimer of a weakly toxic basic protein having phospholipase A2 activity (B chain (AC Q8JFG1)) and a non-toxic acidic protein functioning as its inhibitor (A chain). Requires Ca(2+) as cofactor. As to expression, expressed by the venom gland.

The protein localises to the secreted. It carries out the reaction a 1,2-diacyl-sn-glycero-3-phosphocholine + H2O = a 1-acyl-sn-glycero-3-phosphocholine + a fatty acid + H(+). Heterodimer: postsynaptic neurotoxin. Functionally, monomer: snake venom phospholipase A2 (PLA2) that shows postsynaptic neurotoxicity. PLA2 catalyzes the calcium-dependent hydrolysis of the 2-acyl groups in 3-sn-phosphoglycerides. This chain is Basic phospholipase A2 vaspin B chain, found in Vipera aspis aspis (Aspic viper).